The chain runs to 401 residues: Phosphoglycerate kinase, cytosolic (401 aa).

Residues Val24, Asp25, Asn27, Arg41, Ser63, His64, Gly66, Arg67, Arg122, His154, and Arg155 each contribute to the (2R)-3-phosphoglycerate site. Residue Gly200 participates in ADP binding. Residue Gly200 participates in CDP binding. Residues Lys202 and Lys206 each coordinate AMP. Lys206 contributes to the ATP binding site. Residue Gly224 coordinates ADP. Gly224 lines the CDP pocket. Residues Gly225 and Gly297 each coordinate AMP. ATP-binding residues include Gly225 and Gly297. Residues Gly322 and Phe327 each contribute to the CDP site. Phe327 contacts ADP. Glu328 lines the AMP pocket. Residues Glu328, Asp359, and Ser360 each coordinate ATP. Position 359 (Asp359) interacts with Mg(2+).

Belongs to the phosphoglycerate kinase family. In terms of assembly, monomer. Mg(2+) is required as a cofactor.

It localises to the cytoplasm. The enzyme catalyses (2R)-3-phosphoglycerate + ATP = (2R)-3-phospho-glyceroyl phosphate + ADP. The protein operates within carbohydrate degradation; glycolysis; pyruvate from D-glyceraldehyde 3-phosphate: step 2/5. This Nicotiana tabacum (Common tobacco) protein is Phosphoglycerate kinase, cytosolic.